Reading from the N-terminus, the 456-residue chain is UDP-N-acetylmuramoylalanine--D-glutamate ligase (456 aa).

113 to 119 (GTNGKTT) contributes to the ATP binding site.

This sequence belongs to the MurCDEF family.

The protein localises to the cytoplasm. It catalyses the reaction UDP-N-acetyl-alpha-D-muramoyl-L-alanine + D-glutamate + ATP = UDP-N-acetyl-alpha-D-muramoyl-L-alanyl-D-glutamate + ADP + phosphate + H(+). It functions in the pathway cell wall biogenesis; peptidoglycan biosynthesis. Cell wall formation. Catalyzes the addition of glutamate to the nucleotide precursor UDP-N-acetylmuramoyl-L-alanine (UMA). This chain is UDP-N-acetylmuramoylalanine--D-glutamate ligase, found in Rippkaea orientalis (strain PCC 8801 / RF-1) (Cyanothece sp. (strain PCC 8801)).